Consider the following 122-residue polypeptide: Large ribosomal subunit protein uL14 (122 aa).

This sequence belongs to the universal ribosomal protein uL14 family. As to quaternary structure, part of the 50S ribosomal subunit. Forms a cluster with proteins L3 and L19. In the 70S ribosome, L14 and L19 interact and together make contacts with the 16S rRNA in bridges B5 and B8.

Functionally, binds to 23S rRNA. Forms part of two intersubunit bridges in the 70S ribosome. This is Large ribosomal subunit protein uL14 from Streptomyces griseus subsp. griseus (strain JCM 4626 / CBS 651.72 / NBRC 13350 / KCC S-0626 / ISP 5235).